The primary structure comprises 627 residues: Threonine--tRNA ligase (627 aa).

An editing domain region spans residues 1-147 (MRMLLIHSDY…TIVPSGEAKA (147 aa)). The tract at residues 208–507 (PHVRIMLEQE…QSKGIKPMFP (300 aa)) is catalytic. Zn(2+) contacts are provided by cysteine 300, histidine 352, and histidine 476.

This sequence belongs to the class-II aminoacyl-tRNA synthetase family. In terms of assembly, homodimer. Requires Zn(2+) as cofactor.

Its subcellular location is the cytoplasm. It carries out the reaction tRNA(Thr) + L-threonine + ATP = L-threonyl-tRNA(Thr) + AMP + diphosphate + H(+). Catalyzes the attachment of threonine to tRNA(Thr) in a two-step reaction: L-threonine is first activated by ATP to form Thr-AMP and then transferred to the acceptor end of tRNA(Thr). Also edits incorrectly charged L-seryl-tRNA(Thr). The sequence is that of Threonine--tRNA ligase from Thermococcus onnurineus (strain NA1).